The primary structure comprises 614 residues: Autophagy-related protein 22-1 (614 aa).

The interval 1-29 is disordered; that stretch reads MQNCTNSPEDQAASVCPPPPQFPGDDTRP. An N-linked (GlcNAc...) asparagine glycan is attached at Asn-3. 4 helical membrane-spanning segments follow: residues 41-61, 126-146, 160-180, and 185-205; these read YGWAAEVFTVCAMGSFLPITL, TASFAMYTFSLSVFIQAILII, MLLVIFALIGSVSTMLFLAVV, and LLGGLFAIISNTCFGASFVLL. The tract at residues 229–254 is disordered; the sequence is PTGTSHDSTSTADGPGQTDGTETTSL. Polar residues predominate over residues 230–254; that stretch reads TGTSHDSTSTADGPGQTDGTETTSL. 8 consecutive transmembrane segments (helical) span residues 291–311, 322–342, 383–403, 417–437, 452–472, 486–506, 523–545, and 554–574; these read GIGIGYIGAVILQAICILVVV, LVLFLIGLWWFTFTIPAAMWL, ILLFLAAWFLLSDGIATVSGT, AALGLINVIAMIAGVFGAFSW, IVACIILFELVPLYGLLGFIP, WEMYPLGVIYGLVMGGLSSYC, YALYAITDKGSSVFGPAIVGIIT, and AFVFLAVLILLPLPLMLLVDV.

It belongs to the ATG22 family.

Its subcellular location is the vacuole membrane. In terms of biological role, vacuolar effluxer which mediate the efflux of amino acids resulting from autophagic degradation. The release of autophagic amino acids allows the maintenance of protein synthesis and viability during nitrogen starvation. The chain is Autophagy-related protein 22-1 (atg22-1) from Aspergillus niger (strain ATCC MYA-4892 / CBS 513.88 / FGSC A1513).